The chain runs to 328 residues: Tetraacyldisaccharide 4'-kinase (328 aa).

55–62 (TAGGNGKT) provides a ligand contact to ATP.

Belongs to the LpxK family.

The enzyme catalyses a lipid A disaccharide + ATP = a lipid IVA + ADP + H(+). The protein operates within glycolipid biosynthesis; lipid IV(A) biosynthesis; lipid IV(A) from (3R)-3-hydroxytetradecanoyl-[acyl-carrier-protein] and UDP-N-acetyl-alpha-D-glucosamine: step 6/6. Functionally, transfers the gamma-phosphate of ATP to the 4'-position of a tetraacyldisaccharide 1-phosphate intermediate (termed DS-1-P) to form tetraacyldisaccharide 1,4'-bis-phosphate (lipid IVA). This is Tetraacyldisaccharide 4'-kinase from Escherichia coli O127:H6 (strain E2348/69 / EPEC).